A 1430-amino-acid polypeptide reads, in one-letter code: MTSAAEIKKPPVAPKPKFVVANNKPAPPPIAPKPDIVISSVPQSTKKMKPAIAPKPKVLKTSPVREIGQSPSRKIMLNLEGHKQELAESTDNFNCKYEGNQSNDYISPMCSCSSECIHKLGHRENLCVKQLVLEPLEMNENLENSKIDETLTIKTRSKCDLYGEKAKNQGGVVLKASVLEEELKDALIHQMPPFISAQKHRPTDSPEMNGGCNSNGQFRIEFADLSPSPSSFEKVPDHHSCHLQLPSDECEHFETCQDDSEKSNNCFQSSELEALENGKRSTLISSDGVSKKSEVKDLGPLEIHLVPYTPKFPTPKPRKTRTARLLRQKCVDTPSESTEEPGNSDSSSSCLTENSLKINKISVLHQNVLCKQEQVDKMKLGNKSELNMESNSDAQDLVNSQKAMCNETTSFEKMAPSFDKDSNLSSDSTTVDGSSMSLAVDEGTGFIRCTVSMSLPKQLKLTCNEHLQSGRNLGVSAPQMQKESVIKEENSLRIVPKKPQRHSLPATGVLKKAASEELLEKSSYPSSEEKSSEKSLERNHLQHLCAQNRGVSSSFDMPKRASEKPVWKLPHPILPFSGNPEFLKSVTVSSNSEPSTALTKPRAKSLSAMDVEKCTKPCKDSTKKNSFKKLLSMKLSICFMKSDFQKFWSKSSQLGDTTTGHLSSGEQKGIESDWQGLLVGEEKRSKPIKAYSTENYSLESQKKRKKSRGQTSAANGLRAESLDDQMLSRESSSQAPYKSVTSLCAPEYENIRHYEEIPEYENLPFIMAIRKTQELEWQNSSSMEDADANVYEVEEPYEAPDGQLQLGPRHQHSSSGASQEEQNDLGLGDLPSDEEEIINSSDEDDVSSESSKGEPDPLEDKQDEDNGMKSKVHHIAKEIMSSEKVFVDVLKLLHIDFRDAVAHASRQLGKPVIEDRILNQILYYLPQLYELNRDLLKELEERMLHWTEQQRIADIFVKKGPYLKMYSTYIKEFDKNIALLDEQCKKNPGFAAVVREFEMSPRCANLALKHYLLKPVQRIPQYRLLLTDYLKNLIEDAGDYRDTQDALAVVIEVANHANDTMKQGDNFQKLMQIQYSLNGHHEIVQPGRVFLKEGILMKLSRKVMQPRMFFLFNDALLYTTPVQSGMYKLNNMLSLAGMKVRKPTQEAYQNELKIESVERSFILSASSATERDEWLEAISRAIEEYAKKRITFCPSRSLDEADSENKEEVSPLGSKAPIWIPDTRATMCMICTSEFTLTWRRHHCRACGKIVCQACSSNKYGLDYLKNQPARVCEHCFQELQKLDHQHSPRIGSPGNHKSPSSALSSVLHSIPSGRKQKKIPAALKEVSANTEDSSMSGYLYRSKGNKKPWKHFWFVIKNKVLYTYAASEDVAALESQPLLGFTVIQVKDENSESKVFQLLHKNMLFYVFKAEDAHSAQKWIEAFQEGTIL.

A disordered region spans residues 1–36 (MTSAAEIKKPPVAPKPKFVVANNKPAPPPIAPKPDI). Positions 15–24 (KPKFVVANNK) are enriched in low complexity. Residue S231 is modified to Phosphoserine. The interval 330-351 (CVDTPSESTEEPGNSDSSSSCL) is disordered. Over residues 334–351 (PSESTEEPGNSDSSSSCL) the composition is skewed to polar residues. S515 is modified (phosphoserine). The interval 516 to 538 (EELLEKSSYPSSEEKSSEKSLER) is disordered. The span at 527-538 (SEEKSSEKSLER) shows a compositional bias: basic and acidic residues. 4 positions are modified to phosphoserine: S554, S605, S692, and S721. Disordered regions lie at residues 695 to 739 (NYSL…PYKS) and 800 to 869 (PDGQ…NGMK). The span at 728 to 739 (SRESSSQAPYKS) shows a compositional bias: polar residues. The span at 831–847 (PSDEEEIINSSDEDDVS) shows a compositional bias: acidic residues. Over residues 851 to 868 (SKGEPDPLEDKQDEDNGM) the composition is skewed to basic and acidic residues. One can recognise a DH domain in the interval 871 to 1060 (KVHHIAKEIM…IEVANHANDT (190 aa)). In terms of domain architecture, PH 1 spans 1089-1183 (VFLKEGILMK…WLEAISRAIE (95 aa)). S1197 bears the Phosphoserine mark. The FYVE-type zinc finger occupies 1222–1281 (DTRATMCMICTSEFTLTWRRHHCRACGKIVCQACSSNKYGLDYLKNQPARVCEHCFQELQ). Zn(2+) is bound by residues C1228, C1231, C1244, C1247, C1252, C1255, C1273, and C1276. The region spanning 1333 to 1429 (DSSMSGYLYR…WIEAFQEGTI (97 aa)) is the PH 2 domain.

Its subcellular location is the cytoplasm. It is found in the cytoskeleton. Its function is as follows. May activate CDC42, a member of the Ras-like family of Rho- and Rac proteins, by exchanging bound GDP for free GTP. May play a role in regulating the actin cytoskeleton and cell shape. This is FYVE, RhoGEF and PH domain-containing protein 6 (FGD6) from Homo sapiens (Human).